The chain runs to 647 residues: Acetyl-coenzyme A synthetase (647 aa).

Residues 190 to 193 (RGGR) and Thr310 contribute to the CoA site. ATP-binding positions include 386-388 (GEP), 410-415 (DTWWQT), Asp499, and Arg514. Position 522 (Ser522) interacts with CoA. Residue Arg525 participates in ATP binding. Residues Val536, His538, and Val541 each contribute to the Mg(2+) site. Position 583 (Arg583) interacts with CoA. The residue at position 608 (Lys608) is an N6-acetyllysine.

It belongs to the ATP-dependent AMP-binding enzyme family. The cofactor is Mg(2+). Acetylated. Deacetylation by the SIR2-homolog deacetylase activates the enzyme.

The catalysed reaction is acetate + ATP + CoA = acetyl-CoA + AMP + diphosphate. Catalyzes the conversion of acetate into acetyl-CoA (AcCoA), an essential intermediate at the junction of anabolic and catabolic pathways. AcsA undergoes a two-step reaction. In the first half reaction, AcsA combines acetate with ATP to form acetyl-adenylate (AcAMP) intermediate. In the second half reaction, it can then transfer the acetyl group from AcAMP to the sulfhydryl group of CoA, forming the product AcCoA. This is Acetyl-coenzyme A synthetase from Xylella fastidiosa (strain Temecula1 / ATCC 700964).